A 62-amino-acid chain; its full sequence is Delta-theraphotoxin-Cg1a 1 (62 aa).

The signal sequence occupies residues 1-21; sequence MKTSILFVIFSLALLFALSAA. A propeptide spanning residues 22–29 is cleaved from the precursor; it reads TEIEETDR. Cystine bridges form between C31–C46, C38–C51, and C45–C58.

The protein belongs to the neurotoxin 10 (Hwtx-1) family. 33 (Jztx-1) subfamily. Expressed by the venom gland.

The protein resides in the secreted. Inhibits voltage-gated sodium channels, preferentially subtype Nav1.5/SCN5A (in cardiac myocytes), but also Nav1.6/SCN8A and Nav1.7/SCN9A (TTX-sensitive Nav in rat DRG neurons) and invertebrate Nav (in insect neurons) as well as voltage-gated potassium channels of the subtype Kv2.1/KCNB1. Is suggested to bind to site 3 of the sodium channels and inhibit the inactivation of the activated channels, thereby blocking neuronal transmission. On potassium channels, inhibits activation of channels with an IC(50) of 8.05 uM through a voltage sensor-trapping mechanism. Increases muscle contraction in several assays (mouse phrenic nerve-diaphragm, toad heart, rat vas deferens) and is suggested to act both presynaptically and postsynaptically. In terms of biological role, moderately inhibits voltage-gated sodium channels and weakly inhibits voltage-gated potassium channel. Inhibits the inactivation of rat Nav1.2/SCN2A (IC(50)=870 nM), rat Nav1.3/SCN3A (IC(50)=845 nM), rat Nav1.4/SCN4A (IC(50)=339 nM), human Nav1.5/SCN5A (IC(50)=335 nM) and human Nav1.7/SCN9A sodium channels (IC(50)=348 nM). The toxin delays the inactivation of sodium channels without affecting the activation and steady-state inactivation kinetics in the physiological range of voltages. Site-directed mutagenesis of the sodium channel indicates that the toxin interacts with site 3 located at the extracellular S3-S4 linker of domain IV. On potassium channels, it inhibits activation of channels with an IC(50) of 8.05 uM through a voltage sensor-trapping mechanism. It increases muscle contraction in several assays (mouse phrenic nerve-diaphragm, toad heart, rat vas deferens) and is suggested to act both presynaptically and postsynaptically. The polypeptide is Delta-theraphotoxin-Cg1a 1 (Chilobrachys guangxiensis (Chinese earth tiger tarantula)).